The sequence spans 350 residues: S-adenosylmethionine:tRNA ribosyltransferase-isomerase (350 aa).

It belongs to the QueA family. In terms of assembly, monomer.

Its subcellular location is the cytoplasm. The catalysed reaction is 7-aminomethyl-7-carbaguanosine(34) in tRNA + S-adenosyl-L-methionine = epoxyqueuosine(34) in tRNA + adenine + L-methionine + 2 H(+). The protein operates within tRNA modification; tRNA-queuosine biosynthesis. Transfers and isomerizes the ribose moiety from AdoMet to the 7-aminomethyl group of 7-deazaguanine (preQ1-tRNA) to give epoxyqueuosine (oQ-tRNA). The sequence is that of S-adenosylmethionine:tRNA ribosyltransferase-isomerase from Bacillus cereus (strain ZK / E33L).